We begin with the raw amino-acid sequence, 84 residues long: Small ribosomal subunit protein bS16 (84 aa).

The protein belongs to the bacterial ribosomal protein bS16 family.

In Endomicrobium trichonymphae, this protein is Small ribosomal subunit protein bS16.